The primary structure comprises 284 residues: 4-diphosphocytidyl-2-C-methyl-D-erythritol kinase (284 aa).

K14 is a catalytic residue. 98-108 (PMGGGLGGGSS) provides a ligand contact to ATP. The active site involves D140.

The protein belongs to the GHMP kinase family. IspE subfamily.

The enzyme catalyses 4-CDP-2-C-methyl-D-erythritol + ATP = 4-CDP-2-C-methyl-D-erythritol 2-phosphate + ADP + H(+). Its pathway is isoprenoid biosynthesis; isopentenyl diphosphate biosynthesis via DXP pathway; isopentenyl diphosphate from 1-deoxy-D-xylulose 5-phosphate: step 3/6. Its function is as follows. Catalyzes the phosphorylation of the position 2 hydroxy group of 4-diphosphocytidyl-2C-methyl-D-erythritol. In Shewanella putrefaciens (strain CN-32 / ATCC BAA-453), this protein is 4-diphosphocytidyl-2-C-methyl-D-erythritol kinase.